We begin with the raw amino-acid sequence, 308 residues long: 2-methylisocitrate lyase (308 aa).

51–53 (SGA) contributes to the substrate binding site. 2 residues coordinate Mg(2+): Asp-90 and Asp-92. Residues 127 to 128 (CG), Arg-160, Glu-190, 212 to 214 (NMT), Arg-243, and Arg-272 contribute to the substrate site.

The protein belongs to the isocitrate lyase/PEP mutase superfamily. Methylisocitrate lyase family. In terms of assembly, homotetramer; dimer of dimers. Mg(2+) is required as a cofactor.

It catalyses the reaction (2S,3R)-3-hydroxybutane-1,2,3-tricarboxylate = pyruvate + succinate. It participates in organic acid metabolism; propanoate degradation. Its function is as follows. Involved in the catabolism of short chain fatty acids (SCFA) via the 2-methylcitrate cycle I (propionate degradation route). Catalyzes the thermodynamically favored C-C bond cleavage of (2R,3S)-2-methylisocitrate to yield pyruvate and succinate via an alpha-carboxy-carbanion intermediate. This is 2-methylisocitrate lyase from Aeropyrum pernix (strain ATCC 700893 / DSM 11879 / JCM 9820 / NBRC 100138 / K1).